The chain runs to 149 residues: UPF0208 membrane protein VFMJ11_0876 (149 aa).

Helical transmembrane passes span 41–61 and 69–89; these read FAVKVMPAVAVISVLTQMVFN and AIIIALFAISMPLQGFWWLGN.

The protein belongs to the UPF0208 family.

It localises to the cell inner membrane. The chain is UPF0208 membrane protein VFMJ11_0876 from Aliivibrio fischeri (strain MJ11) (Vibrio fischeri).